The chain runs to 539 residues: Chaperonin GroEL 1 (539 aa).

ATP is bound by residues 30 to 33, Lys-51, 87 to 91, Gly-415, 480 to 482, and Asp-496; these read TLGP, DGTTT, and NAA.

It belongs to the chaperonin (HSP60) family. Forms a cylinder of 14 subunits composed of two heptameric rings stacked back-to-back. Interacts with the co-chaperonin GroES.

The protein resides in the cytoplasm. It catalyses the reaction ATP + H2O + a folded polypeptide = ADP + phosphate + an unfolded polypeptide.. Its function is as follows. Together with its co-chaperonin GroES, plays an essential role in assisting protein folding. The GroEL-GroES system forms a nano-cage that allows encapsulation of the non-native substrate proteins and provides a physical environment optimized to promote and accelerate protein folding. In Erythrobacter litoralis (strain HTCC2594), this protein is Chaperonin GroEL 1.